Consider the following 201-residue polypeptide: Large ribosomal subunit protein uL4 (201 aa).

The tract at residues 44–68 (RAQKSRAEVSGSGRKPWRQKGTGRA) is disordered.

This sequence belongs to the universal ribosomal protein uL4 family. Part of the 50S ribosomal subunit.

Functionally, one of the primary rRNA binding proteins, this protein initially binds near the 5'-end of the 23S rRNA. It is important during the early stages of 50S assembly. It makes multiple contacts with different domains of the 23S rRNA in the assembled 50S subunit and ribosome. Forms part of the polypeptide exit tunnel. In Buchnera aphidicola subsp. Acyrthosiphon pisum (strain APS) (Acyrthosiphon pisum symbiotic bacterium), this protein is Large ribosomal subunit protein uL4.